The chain runs to 319 residues: Acetyl-coenzyme A carboxylase carboxyl transferase subunit alpha (319 aa).

A CoA carboxyltransferase C-terminal domain is found at 39–293; the sequence is RLQKKSNDLT…KAVLEKQLHE (255 aa).

The protein belongs to the AccA family. As to quaternary structure, acetyl-CoA carboxylase is a heterohexamer composed of biotin carboxyl carrier protein (AccB), biotin carboxylase (AccC) and two subunits each of ACCase subunit alpha (AccA) and ACCase subunit beta (AccD).

It localises to the cytoplasm. It carries out the reaction N(6)-carboxybiotinyl-L-lysyl-[protein] + acetyl-CoA = N(6)-biotinyl-L-lysyl-[protein] + malonyl-CoA. Its pathway is lipid metabolism; malonyl-CoA biosynthesis; malonyl-CoA from acetyl-CoA: step 1/1. Functionally, component of the acetyl coenzyme A carboxylase (ACC) complex. First, biotin carboxylase catalyzes the carboxylation of biotin on its carrier protein (BCCP) and then the CO(2) group is transferred by the carboxyltransferase to acetyl-CoA to form malonyl-CoA. The chain is Acetyl-coenzyme A carboxylase carboxyl transferase subunit alpha from Neisseria meningitidis serogroup C (strain 053442).